The sequence spans 183 residues: Ribosome-recycling factor (183 aa).

Belongs to the RRF family.

Its subcellular location is the cytoplasm. Its function is as follows. Responsible for the release of ribosomes from messenger RNA at the termination of protein biosynthesis. May increase the efficiency of translation by recycling ribosomes from one round of translation to another. The protein is Ribosome-recycling factor of Deinococcus radiodurans (strain ATCC 13939 / DSM 20539 / JCM 16871 / CCUG 27074 / LMG 4051 / NBRC 15346 / NCIMB 9279 / VKM B-1422 / R1).